Reading from the N-terminus, the 118-residue chain is Large ribosomal subunit protein bL20 (118 aa).

It belongs to the bacterial ribosomal protein bL20 family.

Its function is as follows. Binds directly to 23S ribosomal RNA and is necessary for the in vitro assembly process of the 50S ribosomal subunit. It is not involved in the protein synthesizing functions of that subunit. This is Large ribosomal subunit protein bL20 from Sulfurovum sp. (strain NBC37-1).